The following is a 136-amino-acid chain: uncharacterized protein (136 aa).

Positions methionine 1–proline 33 are disordered.

It to M.leprae ML0386.

This is an uncharacterized protein from Mycobacterium tuberculosis (strain CDC 1551 / Oshkosh).